The following is a 264-amino-acid chain: Thymidylate synthase (264 aa).

Arginine 21 provides a ligand contact to dUMP. (6R)-5,10-methylene-5,6,7,8-tetrahydrofolate is bound at residue histidine 51. Arginine 126–arginine 127 serves as a coordination point for dUMP. The active-site Nucleophile is cysteine 146. DUMP is bound by residues arginine 166–aspartate 169, asparagine 177, and histidine 207–tyrosine 209. Aspartate 169 is a binding site for (6R)-5,10-methylene-5,6,7,8-tetrahydrofolate. Alanine 263 serves as a coordination point for (6R)-5,10-methylene-5,6,7,8-tetrahydrofolate.

This sequence belongs to the thymidylate synthase family. Bacterial-type ThyA subfamily. Homodimer.

The protein localises to the cytoplasm. It catalyses the reaction dUMP + (6R)-5,10-methylene-5,6,7,8-tetrahydrofolate = 7,8-dihydrofolate + dTMP. The protein operates within pyrimidine metabolism; dTTP biosynthesis. Catalyzes the reductive methylation of 2'-deoxyuridine-5'-monophosphate (dUMP) to 2'-deoxythymidine-5'-monophosphate (dTMP) while utilizing 5,10-methylenetetrahydrofolate (mTHF) as the methyl donor and reductant in the reaction, yielding dihydrofolate (DHF) as a by-product. This enzymatic reaction provides an intracellular de novo source of dTMP, an essential precursor for DNA biosynthesis. The polypeptide is Thymidylate synthase (Azoarcus sp. (strain BH72)).